The following is a 476-amino-acid chain: Serine/threonine-protein kinase Chk1 (476 aa).

The segment at 1–265 is interaction with CLSPN; the sequence is MAVPFVEDWD…IPDIKKDRWY (265 aa). Positions 9-265 constitute a Protein kinase domain; sequence WDLVQTLGEG…IPDIKKDRWY (257 aa). ATP-binding positions include 15-23 and Lys38; that span reads LGEGAYGEV. Asp130 acts as the Proton acceptor in catalysis. Lys132 is covalently cross-linked (Glycyl lysine isopeptide (Lys-Gly) (interchain with G-Cter in ubiquitin)). The segment at 267–329 is disordered; that stretch reads KPLNRGAKRP…EPRTGLSLWD (63 aa). Position 280 is a phosphoserine; by PKB/AKT1 (Ser280). Residues 280–291 show a composition bias toward low complexity; the sequence is SGGMSESSSGFS. Ser286, Ser296, and Ser301 each carry phosphoserine. Polar residues predominate over residues 298 to 320; the sequence is LDFSPINSGSSEENVKFSSSQPE. Residues Ser317 and Ser345 each carry the phosphoserine; by ATM and ATR modification. The autoinhibitory region stretch occupies residues 391–476; that stretch reads QCLKETFEKL…SSQKVWFPVT (86 aa). Residue Lys436 forms a Glycyl lysine isopeptide (Lys-Gly) (interchain with G-Cter in ubiquitin) linkage. Ser463, Ser467, and Ser468 each carry phosphoserine.

It belongs to the protein kinase superfamily. CAMK Ser/Thr protein kinase family. NIM1 subfamily. In terms of assembly, interacts (phosphorylated by ATR) with RAD51. Interacts with and phosphorylates CLSPN, an adapter protein that regulates the ATR-dependent phosphorylation of CHEK1. Interacts with BRCA1. Interacts with and phosphorylates CDC25A, CDC25B and CDC25C. Interacts with FBXO6, which regulates CHEK1. Interacts with PPM1D, which regulates CHEK1 through dephosphorylation. Interacts with TIMELESS; DNA damage-dependent. Interacts with FEM1B; activates CHEK1 in response to stress. Interacts with TLK1. Interacts with XPO1 and YWHAZ. Interacts with CDK5RAP3; antagonizes CHEK1. Post-translationally, phosphorylated by ATR in a RAD17-dependent manner in response to ultraviolet irradiation and inhibition of DNA replication. Phosphorylated by ATM in response to ionizing irradiation. ATM and ATR can both phosphorylate Ser-317 and Ser-345 and this results in enhanced kinase activity. Phosphorylation at Ser-345 induces a change in the conformation of the protein, activates the kinase activity and is a prerequisite for interaction with FBXO6 and subsequent ubiquitination at Lys-436. Phosphorylation at Ser-345 also increases binding to 14-3-3 proteins and promotes nuclear retention. Conversely, dephosphorylation at Ser-345 by PPM1D may contribute to exit from checkpoint mediated cell cycle arrest. Phosphorylation at Ser-280 by AKT1/PKB, may promote mono and/or diubiquitination. Also phosphorylated at undefined residues during mitotic arrest, resulting in decreased activity. In terms of processing, ubiquitinated. Mono or diubiquitination promotes nuclear exclusion. The activated form (phosphorylated on Ser-345) is polyubiquitinated at Lys-436 by some SCF-type E3 ubiquitin ligase complex containing FBXO6 promoting its degradation. Ubiquitination and degradation are required to terminate the checkpoint and ensure that activated CHEK1 does not accumulate as cells progress through S phase, when replication forks encounter transient impediments during normal DNA replication. 'Lys-63'-mediated ubiquitination by TRAF4 at Lys-132 activates cell cycle arrest and activation of DNA repair. Proteolytically cleaved at the C-terminus by SPRTN during normal DNA replication, thereby promoting CHEK1 removal from chromatin and activating the protein kinase activity. As to expression, expressed in brain, heart, liver, lung, skeletal muscle, spleen and testis. Expressed only in liver.

Its subcellular location is the nucleus. It is found in the chromosome. It localises to the cytoplasm. The protein resides in the cytoskeleton. The protein localises to the microtubule organizing center. Its subcellular location is the centrosome. The enzyme catalyses L-seryl-[protein] + ATP = O-phospho-L-seryl-[protein] + ADP + H(+). It carries out the reaction L-threonyl-[protein] + ATP = O-phospho-L-threonyl-[protein] + ADP + H(+). With respect to regulation, activated through phosphorylation predominantly by ATR but also by ATM in response to DNA damage or inhibition of DNA replication. Activation is modulated by several mediators including CLSPN, BRCA1 and FEM1B. Proteolytic cleavage at the C-terminus by SPRTN during normal DNA replication activates the protein kinase activity. In terms of biological role, serine/threonine-protein kinase which is required for checkpoint-mediated cell cycle arrest and activation of DNA repair in response to the presence of DNA damage or unreplicated DNA. May also negatively regulate cell cycle progression during unperturbed cell cycles. This regulation is achieved by a number of mechanisms that together help to preserve the integrity of the genome. Recognizes the substrate consensus sequence [R-X-X-S/T]. Binds to and phosphorylates CDC25A, CDC25B and CDC25C. Phosphorylation of CDC25A at 'Ser-178' and 'Thr-507' and phosphorylation of CDC25C at 'Ser-216' creates binding sites for 14-3-3 proteins which inhibit CDC25A and CDC25C. Phosphorylation of CDC25A at 'Ser-76', 'Ser-124', 'Ser-178', 'Ser-279' and 'Ser-293' promotes proteolysis of CDC25A. Phosphorylation of CDC25A at 'Ser-76' primes the protein for subsequent phosphorylation at 'Ser-79', 'Ser-82' and 'Ser-88' by NEK11, which is required for polyubiquitination and degradation of CDCD25A. Inhibition of CDC25 leads to increased inhibitory tyrosine phosphorylation of CDK-cyclin complexes and blocks cell cycle progression. Also phosphorylates NEK6. Binds to and phosphorylates RAD51 at 'Thr-309', which promotes the release of RAD51 from BRCA2 and enhances the association of RAD51 with chromatin, thereby promoting DNA repair by homologous recombination. Phosphorylates multiple sites within the C-terminus of TP53, which promotes activation of TP53 by acetylation and promotes cell cycle arrest and suppression of cellular proliferation. Also promotes repair of DNA cross-links through phosphorylation of FANCE. Binds to and phosphorylates TLK1 at 'Ser-743', which prevents the TLK1-dependent phosphorylation of the chromatin assembly factor ASF1A. This may enhance chromatin assembly both in the presence or absence of DNA damage. May also play a role in replication fork maintenance through regulation of PCNA. May regulate the transcription of genes that regulate cell-cycle progression through the phosphorylation of histones. Phosphorylates histone H3.1 (to form H3T11ph), which leads to epigenetic inhibition of a subset of genes. May also phosphorylate RB1 to promote its interaction with the E2F family of transcription factors and subsequent cell cycle arrest. Phosphorylates SPRTN, promoting SPRTN recruitment to chromatin. Reduces replication stress and activates the G2/M checkpoint, by phosphorylating and inactivating PABIR1/FAM122A and promoting the serine/threonine-protein phosphatase 2A-mediated dephosphorylation and stabilization of WEE1 levels and activity. The protein is Serine/threonine-protein kinase Chk1 (Chek1) of Rattus norvegicus (Rat).